The primary structure comprises 149 residues: 3-dehydroquinate dehydratase (149 aa).

Residue Y23 is the Proton acceptor of the active site. The substrate site is built by N75, H81, and D88. H101 serves as the catalytic Proton donor. Substrate contacts are provided by residues 102–103 and R112; that span reads LS.

The protein belongs to the type-II 3-dehydroquinase family. Homododecamer.

The catalysed reaction is 3-dehydroquinate = 3-dehydroshikimate + H2O. It participates in metabolic intermediate biosynthesis; chorismate biosynthesis; chorismate from D-erythrose 4-phosphate and phosphoenolpyruvate: step 3/7. In terms of biological role, catalyzes a trans-dehydration via an enolate intermediate. The sequence is that of 3-dehydroquinate dehydratase from Stenotrophomonas maltophilia (strain R551-3).